A 902-amino-acid polypeptide reads, in one-letter code: Aconitate hydratase A (902 aa).

3 residues coordinate [4Fe-4S] cluster: Cys-441, Cys-507, and Cys-510.

Belongs to the aconitase/IPM isomerase family. In terms of assembly, monomer. [4Fe-4S] cluster serves as cofactor.

It carries out the reaction citrate = D-threo-isocitrate. It catalyses the reaction (2S,3R)-3-hydroxybutane-1,2,3-tricarboxylate = 2-methyl-cis-aconitate + H2O. It participates in carbohydrate metabolism; tricarboxylic acid cycle; isocitrate from oxaloacetate: step 2/2. Its pathway is organic acid metabolism; propanoate degradation. Its function is as follows. Involved in the catabolism of short chain fatty acids (SCFA) via the tricarboxylic acid (TCA)(acetyl degradation route) and probably the 2-methylcitrate cycle I (propionate degradation route). Catalyzes the reversible isomerization of citrate to isocitrate via cis-aconitate. Also able to catalyze the hydration of cis-homoaconitate to yield (R)-homocitrate, but with a lower efficiency. Could catalyze the hydration of 2-methyl-cis-aconitate to yield (2R,3S)-2-methylisocitrate. The apo form of AcnA functions as a RNA-binding regulatory protein. This Thermus thermophilus (strain ATCC 27634 / DSM 579 / HB8) protein is Aconitate hydratase A (acoA).